The following is a 124-amino-acid chain: Keratin-associated protein 12-2 (124 aa).

Tandem repeats lie at residues 10–13 (CQAA), 14–18 (CVPSS), 19–23 (CQPSC), 24–28 (STSSP), 33–38 (CFTSSL), 39–43 (CQPTC), 44–48 (STSST), 49–52 (CQAT), 53–57 (CVPVS), 58–62 (YRPAV), 63–67 (CLPVT), 68–72 (YKPTL), 73–77 (CVTPS), 78–82 (CQSSV), 83–87 (FLPVS), 88–92 (YRPAV), 98–102 (CQSSG), 103–107 (CYQPS), 108–112 (CPTLV), and 113–117 (YRPIS). The 20 X 5 AA approximate repeats stretch occupies residues 10–117 (CQAACVPSSC…CPTLVYRPIS (108 aa)).

It belongs to the KRTAP type 12 family. As to quaternary structure, interacts with hair keratins.

In the hair cortex, hair keratin intermediate filaments are embedded in an interfilamentous matrix, consisting of hair keratin-associated proteins (KRTAP), which are essential for the formation of a rigid and resistant hair shaft through their extensive disulfide bond cross-linking with abundant cysteine residues of hair keratins. The matrix proteins include the high-sulfur and high-glycine-tyrosine keratins. This is Keratin-associated protein 12-2 from Bos taurus (Bovine).